Reading from the N-terminus, the 324-residue chain is Transcription factor TCP24 (324 aa).

The TCP domain maps to 50–108 (GKDRHSKVLTSKGLRDRRIRLSVATAIQFYDLQDRLGFDQPSKAVEWLINAASDSITDL). Disordered stretches follow at residues 122 to 215 (QNQT…PMNH) and 261 to 297 (QRSS…NHQL). Over residues 127-142 (SACSSGTSESSLLSLS) the composition is skewed to low complexity. The region spanning 144-162 (TEIRGKARERARERTAKDR) is the R domain. Positions 144 to 167 (TEIRGKARERARERTAKDRDKDLQ) are enriched in basic and acidic residues. Polar residues-rich tracts occupy residues 168-192 (NAHS…NWTG) and 200-212 (VQLQ…SQEP). Positions 261 to 281 (QRSSISSSSSSSSPMDSQSIS) are enriched in low complexity.

In terms of assembly, forms a heterodimeric complex with ABAP1. Interacts with SPL. Expressed in cotyledons, particularly in the vascular region, in leaves, roots, stems, buds, flowers and siliques.

Its subcellular location is the nucleus. Plays a pivotal role in the control of morphogenesis of shoot organs by negatively regulating the expression of boundary-specific genes such as CUC genes, probably through the induction of miRNA (e.g. miR164). In association with ABAP1, exerts a negative role in cell proliferation in leaves, possibly by inhibiting mitotic DNA replication. Participates in ovule development. This chain is Transcription factor TCP24 (TCP24), found in Arabidopsis thaliana (Mouse-ear cress).